A 239-amino-acid polypeptide reads, in one-letter code: MKIDILTLFPDMFAPLEHSIVGKAKDKGILEINYHNFRDNAEKARHVDDEPYGGGQGMLLRAQPIFDTFDKLNVTKPRVILLDPAGRTFNQAYAEELAQEEELVFICGHYEGYDERIKTLVTDEISLGDFVLTGGELAAMTIVDATVRLIPEVLGKEASHKDDSFSSGLLEFPQYTRPAEFRGMKVPDVLLSGHHVNIRRWRMEQSLRKTWERRPDLLENYDFTDEERQILEEIKSEGK.

S-adenosyl-L-methionine contacts are provided by residues Gly-108 and 127-132 (LGDFVL).

Belongs to the RNA methyltransferase TrmD family. As to quaternary structure, homodimer.

Its subcellular location is the cytoplasm. It catalyses the reaction guanosine(37) in tRNA + S-adenosyl-L-methionine = N(1)-methylguanosine(37) in tRNA + S-adenosyl-L-homocysteine + H(+). In terms of biological role, specifically methylates guanosine-37 in various tRNAs. The polypeptide is tRNA (guanine-N(1)-)-methyltransferase (Streptococcus thermophilus (strain ATCC BAA-250 / LMG 18311)).